The chain runs to 188 residues: Elongation factor P (188 aa).

Lys-34 bears the N6-(3,6-diaminohexanoyl)-5-hydroxylysine mark.

This sequence belongs to the elongation factor P family. May be beta-lysylated on the epsilon-amino group of Lys-34 by the combined action of EpmA and EpmB, and then hydroxylated on the C5 position of the same residue by EpmC (if this protein is present). Lysylation is critical for the stimulatory effect of EF-P on peptide-bond formation. The lysylation moiety may extend toward the peptidyltransferase center and stabilize the terminal 3-CCA end of the tRNA. Hydroxylation of the C5 position on Lys-34 may allow additional potential stabilizing hydrogen-bond interactions with the P-tRNA.

It is found in the cytoplasm. It participates in protein biosynthesis; polypeptide chain elongation. Functionally, involved in peptide bond synthesis. Alleviates ribosome stalling that occurs when 3 or more consecutive Pro residues or the sequence PPG is present in a protein, possibly by augmenting the peptidyl transferase activity of the ribosome. Modification of Lys-34 is required for alleviation. The sequence is that of Elongation factor P from Haemophilus influenzae (strain 86-028NP).